The sequence spans 252 residues: C4b-binding protein beta chain (252 aa).

The N-terminal stretch at 1-17 (MFFWCACCLMVAWRVSA) is a signal peptide. Sushi domains lie at 21 to 78 (EHCP…ECRL), 79 to 136 (GHCP…ICKS), and 137 to 193 (RDCD…VCKL). Intrachain disulfides connect Cys-23/Cys-63, Cys-49/Cys-76, Cys-81/Cys-121, Cys-107/Cys-134, Cys-139/Cys-179, and Cys-165/Cys-191. Asn-64, Asn-71, Asn-98, Asn-117, and Asn-154 each carry an N-linked (GlcNAc...) asparagine glycan.

In terms of assembly, disulfide-linked complex of alpha and beta chains of 3 possible sorts: a 570 kDa complex of 7 alpha chains and 1 beta chain, a 530 kDa homoheptamer of alpha chains or a 500 kDa complex of 6 alpha chains and 1 beta chain. The central body of the alpha chain homomer supports tentacles, each with the binding site for C4b at the end.

The protein resides in the secreted. Functionally, controls the classical pathway of complement activation. It binds as a cofactor to C3b/C4b inactivator (C3bINA), which then hydrolyzes the complement fragment C4b. It also accelerates the degradation of the C4bC2a complex (C3 convertase) by dissociating the complement fragment C2a. It also interacts with anticoagulant protein S and with serum amyloid P component. The beta chain binds protein S. In Homo sapiens (Human), this protein is C4b-binding protein beta chain (C4BPB).